A 160-amino-acid polypeptide reads, in one-letter code: MLRQLKLTLNISRWIFMPWQRHASASSSQVPPFLAPISDDVIVDYEDPDYLPLPEYPVRPNEPLETRKQRLLYQSRKRGMLENDLLLSTFAAKYLKDFSAEQTAIYDQLINGVSNDWDIYYWATEVKPTPEEYNTEIMKLLKEHVKNAERVTRFRQPDLT.

The N-terminal 23 residues, 1-23 (MLRQLKLTLNISRWIFMPWQRHA), are a transit peptide targeting the mitochondrion.

Belongs to the SDHAF2 family. Interacts with the flavoprotein subunit within the SDH catalytic dimer.

It is found in the mitochondrion matrix. Its function is as follows. Plays an essential role in the assembly of succinate dehydrogenase (SDH), an enzyme complex (also referred to as respiratory complex II) that is a component of both the tricarboxylic acid (TCA) cycle and the mitochondrial electron transport chain, and which couples the oxidation of succinate to fumarate with the reduction of ubiquinone (coenzyme Q) to ubiquinol. Required for flavinylation (covalent attachment of FAD) of the flavoprotein subunit of the SDH catalytic dimer. The chain is Succinate dehydrogenase assembly factor 2-B, mitochondrial from Drosophila pseudoobscura pseudoobscura (Fruit fly).